The chain runs to 311 residues: Ribosomal RNA small subunit methyltransferase H (311 aa).

S-adenosyl-L-methionine-binding positions include Gly-39–His-41, Asp-59, Phe-87, Asp-102, and His-109.

It belongs to the methyltransferase superfamily. RsmH family.

It is found in the cytoplasm. The catalysed reaction is cytidine(1402) in 16S rRNA + S-adenosyl-L-methionine = N(4)-methylcytidine(1402) in 16S rRNA + S-adenosyl-L-homocysteine + H(+). Functionally, specifically methylates the N4 position of cytidine in position 1402 (C1402) of 16S rRNA. The chain is Ribosomal RNA small subunit methyltransferase H from Porphyromonas gingivalis (strain ATCC 33277 / DSM 20709 / CIP 103683 / JCM 12257 / NCTC 11834 / 2561).